The chain runs to 68 residues: ATP synthase protein 8 (68 aa).

A helical transmembrane segment spans residues 8–24 (VWPTIIMSMLLALFLLM). Lys54 is modified (N6-acetyllysine; alternate). Lys54 carries the N6-succinyllysine; alternate modification. Lys57 is modified (N6-acetyllysine).

It belongs to the ATPase protein 8 family. In terms of assembly, F-type ATPases have 2 components, CF(1) - the catalytic core - and CF(0) - the membrane proton channel. Component of an ATP synthase complex composed of ATP5PB, ATP5MC1, ATP5F1E, ATP5PD, ATP5ME, ATP5PF, ATP5MF, MT-ATP6, MT-ATP8, ATP5F1A, ATP5F1B, ATP5F1D, ATP5F1C, ATP5PO, ATP5MG, ATP5MK and ATP5MJ. Interacts with PRICKLE3.

The protein resides in the mitochondrion membrane. Functionally, mitochondrial membrane ATP synthase (F(1)F(0) ATP synthase or Complex V) produces ATP from ADP in the presence of a proton gradient across the membrane which is generated by electron transport complexes of the respiratory chain. F-type ATPases consist of two structural domains, F(1) - containing the extramembraneous catalytic core and F(0) - containing the membrane proton channel, linked together by a central stalk and a peripheral stalk. During catalysis, ATP synthesis in the catalytic domain of F(1) is coupled via a rotary mechanism of the central stalk subunits to proton translocation. Part of the complex F(0) domain. Minor subunit located with subunit a in the membrane. In Hylobates lar (Lar gibbon), this protein is ATP synthase protein 8 (MT-ATP8).